A 315-amino-acid polypeptide reads, in one-letter code: DNA-directed RNA polymerase subunit alpha (315 aa).

Positions 1–228 (MLEIEKPKIE…EHFKLFMTLT (228 aa)) are alpha N-terminal domain (alpha-NTD). An alpha C-terminal domain (alpha-CTD) region spans residues 245-315 (KEKVLEMTIE…LGLGLRKSED (71 aa)).

The protein belongs to the RNA polymerase alpha chain family. In terms of assembly, homodimer. The RNAP catalytic core consists of 2 alpha, 1 beta, 1 beta' and 1 omega subunit. When a sigma factor is associated with the core the holoenzyme is formed, which can initiate transcription.

The enzyme catalyses RNA(n) + a ribonucleoside 5'-triphosphate = RNA(n+1) + diphosphate. DNA-dependent RNA polymerase catalyzes the transcription of DNA into RNA using the four ribonucleoside triphosphates as substrates. This chain is DNA-directed RNA polymerase subunit alpha, found in Clostridium botulinum (strain Langeland / NCTC 10281 / Type F).